A 158-amino-acid chain; its full sequence is Protein E6 (158 aa).

Zinc fingers lie at residues 32–68 and 105–141; these read CVYC…CQKC and CMSC…CRHC. Positions 156-158 match the PDZ-binding domain motif; the sequence is TQV.

Belongs to the papillomaviridae E6 protein family. As to quaternary structure, forms homodimers. Interacts with ubiquitin-protein ligase UBE3A/E6-AP and thus forms a complex with human TP53. Interacts with human NFX1 and MAGI3. Interacts with human IRF3; this interaction inhibits the establishment of antiviral state. Interacts with human TYK2; this interaction inhibits JAK-STAT activation by interferon alpha. Interacts with host DLG1; this interaction leads to the proteasomal degradation of DLG1.

It localises to the host cytoplasm. The protein localises to the host nucleus. In terms of biological role, plays a major role in the induction and maintenance of cellular transformation. Acts mainly as an oncoprotein by stimulating the destruction of many host cell key regulatory proteins. E6 associates with host UBE3A/E6-AP ubiquitin-protein ligase, and inactivates tumor suppressors TP53 and TP73 by targeting them to the 26S proteasome for degradation. In turn, DNA damage and chromosomal instabilities increase and lead to cell proliferation and cancer development. The complex E6/E6AP targets several other substrates to degradation via the proteasome including host DLG1 or NFX1, a repressor of human telomerase reverse transcriptase (hTERT). The resulting increased expression of hTERT prevents the shortening of telomere length leading to cell immortalization. Other cellular targets including BAK1, Fas-associated death domain-containing protein (FADD) and procaspase 8, are degraded by E6/E6AP causing inhibition of apoptosis. E6 also inhibits immune response by interacting with host IRF3 and TYK2. These interactions prevent IRF3 transcriptional activities and inhibit TYK2-mediated JAK-STAT activation by interferon alpha resulting in inhibition of the interferon signaling pathway. The sequence is that of Protein E6 from Homo sapiens (Human).